We begin with the raw amino-acid sequence, 165 residues long: uncharacterized protein (165 aa).

Positions 1–36 (MTRLCLPRPEAREDPIPVPPRGLGAGEGSGSPVRPP) are disordered. The chain crosses the membrane as a helical span at residues 135-155 (LLLLMGLGPLLRACGMPLTLL).

The protein resides in the membrane. This is an uncharacterized protein from Homo sapiens (Human).